The primary structure comprises 160 residues: Large ribosomal subunit protein uL13 (160 aa).

It belongs to the universal ribosomal protein uL13 family. In terms of assembly, part of the 50S ribosomal subunit.

Its function is as follows. This protein is one of the early assembly proteins of the 50S ribosomal subunit, although it is not seen to bind rRNA by itself. It is important during the early stages of 50S assembly. The protein is Large ribosomal subunit protein uL13 of Orientia tsutsugamushi (strain Ikeda) (Rickettsia tsutsugamushi).